Here is a 109-residue protein sequence, read N- to C-terminus: MKVLVLFSVLFLTLFSYSSTEAIDEFDSDAEDDMLSLMANEQVRAKACTPRLHDCSHDRHSCCRGELSKDVCYCFYPEGEDKTEVCSCQQPKSHKYIEKVVDKAKTVVG.

An N-terminal signal peptide occupies residues 1–22 (MKVLVLFSVLFLTLFSYSSTEA). The propeptide occupies 23–44 (IDEFDSDAEDDMLSLMANEQVR). The knottin domain stretch occupies residues 45–88 (AKACTPRLHDCSHDRHSCCRGELSKDVCYCFYPEGEDKTEVCSC). Cystine bridges form between Cys-48–Cys-63, Cys-55–Cys-72, Cys-62–Cys-88, and Cys-74–Cys-86. Residues 89 to 108 (QQPKSHKYIEKVVDKAKTVV) form a linear cationic cytotoxin domain region.

This sequence belongs to the neurotoxin 19 (CSTX) family. 05 (U4-Lctx) subfamily. Expressed by the venom gland.

The protein resides in the secreted. Its function is as follows. Enhances the high-affinity desensitization of human P2RX3 purinoceptors. In Lycosa singoriensis (Wolf spider), this protein is U4-lycotoxin-Ls1b.